The following is a 289-amino-acid chain: N-acetylmuramoyl-L-alanine amidase AmiA (289 aa).

Positions 1–34 (MSTFKPLKTLTSRRQVLKAGLAALTLSGMSQAIA) form a signal peptide, tat-type signal. The disordered stretch occupies residues 39-63 (LKTSNGHSKPKAKKSGGKRVVVLDP). Residues 46 to 55 (SKPKAKKSGG) are compositionally biased toward basic residues. Residues 59 to 273 (VVLDPGHGGI…IATAIAEGVI (215 aa)) enclose the MurNAc-LAA domain.

It belongs to the N-acetylmuramoyl-L-alanine amidase 3 family. Exported by the Tat system. The position of the signal peptide cleavage has not been experimentally proven. Can also be exported by the Sec system.

It is found in the periplasm. The catalysed reaction is Hydrolyzes the link between N-acetylmuramoyl residues and L-amino acid residues in certain cell-wall glycopeptides.. Cell-wall hydrolase involved in septum cleavage during cell division. Can also act as powerful autolysin in the presence of murein synthesis inhibitors. This is N-acetylmuramoyl-L-alanine amidase AmiA (amiA) from Escherichia coli (strain K12).